We begin with the raw amino-acid sequence, 314 residues long: Hydrolase 4 (314 aa).

The Involved in the stabilization of the negatively charged intermediate by the formation of the oxyanion hole motif lies at 73 to 75 (HGA). Catalysis depends on residues Ser165 and Asp260.

Belongs to the 'GDXG' lipolytic enzyme family.

It functions in the pathway alkaloid biosynthesis. Its function is as follows. Component of the seco-iridoid and derivatives monoterpenoid indole alkaloids (MIAs, e.g. vincadifformine) biosynthesis pathway. Catalyzes the conversion of O-acetylstemmadenine (OAS) to vincadifformine. May also trigger the formation of additional unknown MIAs. The sequence is that of Hydrolase 4 from Catharanthus roseus (Madagascar periwinkle).